We begin with the raw amino-acid sequence, 96 residues long: Large ribosomal subunit protein uL23 (96 aa).

The protein belongs to the universal ribosomal protein uL23 family. As to quaternary structure, part of the 50S ribosomal subunit. Contacts protein L29, and trigger factor when it is bound to the ribosome.

Functionally, one of the early assembly proteins it binds 23S rRNA. One of the proteins that surrounds the polypeptide exit tunnel on the outside of the ribosome. Forms the main docking site for trigger factor binding to the ribosome. In Halalkalibacterium halodurans (strain ATCC BAA-125 / DSM 18197 / FERM 7344 / JCM 9153 / C-125) (Bacillus halodurans), this protein is Large ribosomal subunit protein uL23.